Consider the following 360-residue polypeptide: Peptide chain release factor 1 (360 aa).

Q237 is modified (N5-methylglutamine).

This sequence belongs to the prokaryotic/mitochondrial release factor family. Methylated by PrmC. Methylation increases the termination efficiency of RF1.

The protein localises to the cytoplasm. Functionally, peptide chain release factor 1 directs the termination of translation in response to the peptide chain termination codons UAG and UAA. The sequence is that of Peptide chain release factor 1 from Pseudomonas syringae pv. tomato (strain ATCC BAA-871 / DC3000).